Reading from the N-terminus, the 477-residue chain is Tyrosine-protein kinase transforming protein Fes (477 aa).

The segment at 49-76 (GEPPPVLLLQDDRHSTSSSEQEREGGRT) is disordered. Positions 58-74 (QDDRHSTSSSEQEREGG) are enriched in basic and acidic residues. Residues 115-204 (WYHGALPRAE…KSGIVLNRAV (90 aa)) enclose the SH2 domain. The Protein kinase domain maps to 216–477 (LVLGEQIGRG…ELQSIRKRHR (262 aa)). Residues 222-230 (IGRGNFGEV) and K245 each bind ATP. D338 functions as the Proton acceptor in the catalytic mechanism. A Phosphotyrosine; by autocatalysis modification is found at Y368.

Belongs to the protein kinase superfamily. Tyr protein kinase family. Fes/fps subfamily.

The enzyme catalyses L-tyrosyl-[protein] + ATP = O-phospho-L-tyrosyl-[protein] + ADP + H(+). The polypeptide is Tyrosine-protein kinase transforming protein Fes (V-FES) (Feline sarcoma virus (strain Snyder-Theilen)).